The sequence spans 39 residues: Protein YkiC (39 aa).

A helical membrane pass occupies residues 13–35 (LLSAKLCNCTQAIMTHIIASFLA).

The protein resides in the cell inner membrane. This is Protein YkiC from Escherichia coli (strain K12).